A 90-amino-acid polypeptide reads, in one-letter code: U7-theraphotoxin-Hhn1a 8 (90 aa).

Residues 1-19 form the signal peptide; the sequence is MKTAIFTVVLALAVFAVLS. Residues 20–50 constitute a propeptide that is removed on maturation; that stretch reads FGWEANEKALSEEFTELIHEKGAASETEARE. Intrachain disulfides connect Cys-51–Cys-65, Cys-58–Cys-70, and Cys-64–Cys-81.

It belongs to the neurotoxin 10 (Hwtx-1) family. 13 (Hntx-13) subfamily. As to expression, expressed by the venom gland.

The protein localises to the secreted. Its function is as follows. Ion channel inhibitor. The chain is U7-theraphotoxin-Hhn1a 8 from Cyriopagopus hainanus (Chinese bird spider).